We begin with the raw amino-acid sequence, 116 residues long: Large ribosomal subunit protein bL17 (116 aa).

This sequence belongs to the bacterial ribosomal protein bL17 family. As to quaternary structure, part of the 50S ribosomal subunit. Contacts protein L32.

The chain is Large ribosomal subunit protein bL17 from Synechococcus sp. (strain JA-2-3B'a(2-13)) (Cyanobacteria bacterium Yellowstone B-Prime).